A 156-amino-acid chain; its full sequence is S-ribosylhomocysteine lyase (156 aa).

Residues H54, H58, and C123 each coordinate Fe cation.

It belongs to the LuxS family. As to quaternary structure, homodimer. Fe cation is required as a cofactor.

The catalysed reaction is S-(5-deoxy-D-ribos-5-yl)-L-homocysteine = (S)-4,5-dihydroxypentane-2,3-dione + L-homocysteine. Involved in the synthesis of autoinducer 2 (AI-2) which is secreted by bacteria and is used to communicate both the cell density and the metabolic potential of the environment. The regulation of gene expression in response to changes in cell density is called quorum sensing. Catalyzes the transformation of S-ribosylhomocysteine (RHC) to homocysteine (HC) and 4,5-dihydroxy-2,3-pentadione (DPD). The chain is S-ribosylhomocysteine lyase from Ligilactobacillus salivarius (strain UCC118) (Lactobacillus salivarius).